Reading from the N-terminus, the 82-residue chain is Large ribosomal subunit protein uL24c (82 aa).

The protein belongs to the universal ribosomal protein uL24 family. As to quaternary structure, part of the 50S ribosomal subunit.

Its subcellular location is the plastid. The protein resides in the chloroplast. In terms of biological role, one of two assembly initiator proteins, it binds directly to the 5'-end of the 23S rRNA, where it nucleates assembly of the 50S subunit. The polypeptide is Large ribosomal subunit protein uL24c (rpl24) (Phaeodactylum tricornutum (strain CCAP 1055/1)).